Here is a 612-residue protein sequence, read N- to C-terminus: Netrin unc-6 (612 aa).

A signal peptide spans 1–21 (MITSVLRYVLALYFCMGIAHG). Residues 43–290 (RPVRCVPEFI…SMGELAVGGR (248 aa)) form the Laminin N-terminal domain. N-linked (GlcNAc...) asparagine glycosylation is found at N114, N128, and N268. C117 and C149 are joined by a disulfide. 14 disulfides stabilise this stretch: C291/C300, C293/C310, C312/C321, C324/C344, C347/C356, C349/C374, C377/C386, C389/C407, C410/C422, C412/C429, C431/C440, C443/C457, C478/C547, and C494/C604. Laminin EGF-like domains lie at 291–346 (CKCN…SCVA), 347–409 (CNCN…ACKS), and 410–459 (CGCH…PCIK). N-linked (GlcNAc...) asparagine glycosylation occurs at N368. Residue N423 is glycosylated (N-linked (GlcNAc...) asparagine). In terms of domain architecture, NTR spans 478–604 (CSKCRIVPKR…FSKKDKLGQC (127 aa)). The N-linked (GlcNAc...) asparagine glycan is linked to N564.

In terms of assembly, binds to unc-5 and unc-40 receptors.

It is found in the secreted. The protein resides in the extracellular space. Its subcellular location is the extracellular matrix. It localises to the basement membrane. Component of an extracellular matrix cue that guides dorsoventral migrations on the epidermis. Required for the guidance of pioneer axons and migrating cells along the body wall. In particular, it is required for the guidance of axons from neurons, including SubL neurons and AIY interneurons, into the nerve ring. During gonad morphogenesis, involved in distal tip cell (DTC) migration from the dorsal side of the hermaphrodite body to the midbody to allow for formation of gonad arms. Its association with either unc-40 or unc-5 receptors will lead to axon attraction or repulsion, respectively. Involved in dendritic morphogenesis; may act by association with unc-40 at the tips of growing dendrites for interaction with unc-5 on the apposing branch to induce mutual repulsion. Involved in the positioning of ray 1, the most anterior ray sensilium, in the male tail. Required for the formation of synapses between the AVA interneurons and the PHB sensory neurons. This Caenorhabditis elegans protein is Netrin unc-6.